A 308-amino-acid chain; its full sequence is MKVTPLAFESLGVRSQATLVETKDVRILIDPAVSLAPRRYGLPPHQLEVDKLTELAKKIYEISKDVDIIVITHYHYDHHDPGYVIPIEIYSNKMVFIKDPTNNINNSQKYRRAPKFLRALKDIPNKIEVADGKEFIFGSTKLIFSKAVPHGADERLGYVIQLGINDKDGTVLFTSDIEGAPKEQHLDFTKKISPNFIIIDGPLSYLLGRALSEEDLDKSIKNMESIVKNGLQYAIIDHHVLRDLNHENVLKPVKEVAKDFGVKVISAAEYLGVEPNLLEAHRRELFKKENKPARIPRGLAKLLHAGDN.

It belongs to the UPF0282 family.

The chain is UPF0282 protein STK_23220 from Sulfurisphaera tokodaii (strain DSM 16993 / JCM 10545 / NBRC 100140 / 7) (Sulfolobus tokodaii).